The following is a 532-amino-acid chain: MFRFREIEKTLCMDRTRDCAVRFHVYLQSLDLGSSDPLSPDFDGLAYLRDECLTKHPSLGDSNSDARRKELAYAKLMDSDQRCKIQNSNGYDYSHIESGVLSGILKTAQALVANLLTGFESHFLNDCSFSNGASQGFKLRDAAPFKKIAGQATVTAPAYDIAVAAVKTCAPWYAYMQETYGDETKWFRRVYGNGLFSVPKNNKIDRAACKEPDMNMYLQKGAGSFIRKRLRSVGIDLNDQTRNQELARLGSIDGSLATIDLSSASDSISDRLVWDLLPPHVYSYLARIRTSFTMIDGRLHKWGLFSTMGNGFTFELESMIFWALSKSIMLSMGVTGSLGIYGDDIIVPVECRPTLLKVLSAVNFLPNEEKTFTTGYFRESCGAHFFKDADMKPFYCKRPMETLPDVMLLCNRIRGWQTVGGMSDPRLFPIWKEFADMIPPKFKGGCNLDRDTYLVSPDKPGVSLVRIAKVRSGFNHAFPYGHENGRYVHWLHMGSGEVLETISSARYRCKPNSEWRTQIPLFPQELEACVLS.

Positions 245–375 (ELARLGSIDG…PNEEKTFTTG (131 aa)) constitute a RdRp catalytic domain.

As to quaternary structure, part of the viral RNA-dependent RNA polymerase complex, the other subunits are probably the host ribosomal protein S1, EF-Tu and EF-Ts.

It carries out the reaction RNA(n) + a ribonucleoside 5'-triphosphate = RNA(n+1) + diphosphate. Functionally, this is the catalytic subunit of the viral RNA-dependent RNA polymerase complex. This complex is involved in viral RNA replication that produces (+)-stranded genomes via a complementary, (-)-stranded intermediate. This is RNA-directed RNA polymerase beta chain from Escherichia coli (Bacteriophage GA).